The sequence spans 155 residues: Ribosome maturation factor RimP (155 aa).

The protein belongs to the RimP family.

Its subcellular location is the cytoplasm. Functionally, required for maturation of 30S ribosomal subunits. This chain is Ribosome maturation factor RimP, found in Desulforapulum autotrophicum (strain ATCC 43914 / DSM 3382 / VKM B-1955 / HRM2) (Desulfobacterium autotrophicum).